A 936-amino-acid polypeptide reads, in one-letter code: Calcium homeostasis endoplasmic reticulum protein (936 aa).

Met-1 carries the N-acetylmethionine modification. The SURP motif repeat unit spans residues 15-57 (VIDKLAQFVARNGPEFEKMTMEKQKDNPKFSFLFGGEFYSYYK). Lys-18 is subject to N6-acetyllysine. The interval 77–102 (EPTSAMPPLPQPPLAPTASLTPAQGT) is disordered. Over residues 81-91 (AMPPLPQPPLA) the composition is skewed to pro residues. The 141-residue stretch at 149–289 (ETQLDMSEFD…QLQSPALGLG (141 aa)) folds into the CID domain. The interval 328 to 646 (LAQQQQQQQQ…RQGPPHINHD (319 aa)) is disordered. Positions 330–355 (QQQQQQQQQQQQQPQPQPQPQIQLPQ) are enriched in low complexity. Pro residues predominate over residues 363–383 (TPPPPAPPPASAPAPTIPPTT). Residues 395-405 (PGSSEYDTSAG) show a composition bias toward polar residues. A compositionally biased stretch (low complexity) spans 488-500 (PWNNQPDPNWNNQ). Over residues 534 to 550 (PFPPHQQHPQFNQPPHP) the composition is skewed to pro residues. Low complexity predominate over residues 551-560 (HNFNRFPPRF). Residues 561–572 (MQDDFPPRHPFE) are compositionally biased toward basic and acidic residues. Basic residues predominate over residues 594–603 (PHHHPGHRMP). Tyr-723 carries the post-translational modification Phosphotyrosine. The interval 731 to 887 (RARRRKGQEK…DPIKGGDVRD (157 aa)) is disordered. Residues 748-758 (SRSRSKSRGRS) show a composition bias toward basic residues. Residues 759 to 773 (SSRSSSRSSKSSRSS) are compositionally biased toward low complexity. A compositionally biased stretch (basic residues) spans 774 to 824 (SRSHSRSRSRSSSRSRSRSRSRSRSSRSRSRSRSRSRSKSYSPGRRRRSRS). Residues Ser-822, Ser-824, and Ser-826 each carry the phosphoserine modification. A Phosphothreonine modification is found at Thr-828. Ser-837 is modified (phosphoserine). Positions 850–900 (EENKGHQMLVKMGWSGSGGLGAKEQGIQDPIKGGDVRDKWDQYKGVGVALD) constitute a G-patch domain. A Glycyl lysine isopeptide (Lys-Gly) (interchain with G-Cter in SUMO2) cross-link involves residue Lys-853. Residues Ser-864 and Ser-866 each carry the phosphoserine modification. Lys-881 is covalently cross-linked (Glycyl lysine isopeptide (Lys-Gly) (interchain with G-Cter in SUMO2)). N6-acetyllysine is present on Lys-888. Ser-913 carries the post-translational modification Phosphoserine.

The protein localises to the cytoplasm. It localises to the perinuclear region. Its subcellular location is the endoplasmic reticulum. Its function is as follows. Involved in calcium homeostasis, growth and proliferation. The polypeptide is Calcium homeostasis endoplasmic reticulum protein (Mus musculus (Mouse)).